We begin with the raw amino-acid sequence, 207 residues long: MTSRKKVLLKVIILGDSGVGKTSLMNQYVNKKFSNQYKATIGADFLTKEVMVDDRLVTMQIWDTAGQERFQSLSVAFYRGADCCVLVFDVTAPNTFKTLDSWRLEFLIQASPRDPENFPFVVLGNKIDLENRQVATKRAQAWSYSKNNIPYFETSAKEAINVEQAFQTIARNALKQETEVELYNEFPEPMKLDKNDRAKTSAESCSC.

T2 bears the N-acetylthreonine mark. 11 residues coordinate GTP: S17, G18, V19, G20, K21, T22, S23, S34, N35, Y37, and T40. T22 contacts Mg(2+). The short motif at 28–41 is the Switch 1 element; it reads YVNKKFSNQYKATI. Residues T40 and D63 each coordinate Mg(2+). A GTP-binding site is contributed by G66. Positions 67–82 match the Switch 2 motif; sequence QERFQSLSVAFYRGAD. S72 is subject to Phosphoserine. GTP contacts are provided by N125, K126, D128, A156, and K157. Residues K191 and K194 each participate in a glycyl lysine isopeptide (Lys-Gly) (interchain with G-Cter in ubiquitin) cross-link. Residues C205 and C207 are each lipidated (S-geranylgeranyl cysteine). C207 is modified (cysteine methyl ester).

This sequence belongs to the small GTPase superfamily. Rab family. In terms of assembly, interacts with NTRK1/TRKA. Interacts with RILP. Interacts with PSMA7. Interacts with RNF115. Interacts with FYCO1. Interacts with the PIK3C3/VPS34-PIK3R4 complex. The GTP-bound form interacts with OSBPL1A. The GTP-bound form interacts with RAC1. Interacts with CLN3. Interacts with CHM, the substrate-binding subunit of the Rab geranylgeranyltransferase complex. Interacts with C9orf72. Does not interact with HPS4 and the BLOC-3 complex (heterodimer of HPS1 and HPS4). Interacts with CLN5. Interacts with PLEKHM1 (via N- and C-terminus). Interacts with PRPH; the interaction is direct. Interacts with VPS13A. The GDP-bound form interacts with RIMOC1. Interacts with the MON1A-CCZ1B complex and this interaction is enhanced in the presence of RIMOC1. Interacts with VPS39 and VPS41. Forms a ternary complex with LAMP2 and RUFY4; the interaction with LAMP2 is mediated by RUFY4 (via RUN and coiled coil domains). It depends on Mg(2+) as a cofactor. In terms of processing, deubiquitination at Lys-191 and Lys-194 by USP32. Post-translationally, phosphorylated at Ser-72 by LRRK1; phosphorylation is dependent on protein kinase C (PKC) activation of LRRK1. Prenylated. Prenylation is required for association with cellular membranes.

It is found in the cytoplasmic vesicle. The protein resides in the phagosome membrane. The protein localises to the late endosome membrane. It localises to the lysosome membrane. Its subcellular location is the melanosome membrane. It is found in the autophagosome membrane. The protein resides in the lipid droplet. The protein localises to the endosome membrane. It localises to the mitochondrion membrane. It catalyses the reaction GTP + H2O = GDP + phosphate + H(+). Regulated by guanine nucleotide exchange factors (GEFs) which promote the exchange of bound GDP for free GTP. Regulated by GTPase activating proteins (GAPs) which increase the GTP hydrolysis activity. Inhibited by GDP dissociation inhibitors (GDIs). Functionally, the small GTPases Rab are key regulators of intracellular membrane trafficking, from the formation of transport vesicles to their fusion with membranes. Rabs cycle between an inactive GDP-bound form and an active GTP-bound form that is able to recruit to membranes different sets of downstream effectors directly responsible for vesicle formation, movement, tethering and fusion. In its active state, RAB7A binds to a variety of effector proteins playing a key role in the regulation of endo-lysosomal trafficking. Governs early-to-late endosomal maturation, microtubule minus-end as well as plus-end directed endosomal migration and positioning, and endosome-lysosome transport through different protein-protein interaction cascades. Also plays a central role in growth-factor-mediated cell signaling, nutrient-transporter-mediated nutrient uptake, neurotrophin transport in the axons of neurons and lipid metabolism. Also involved in regulation of some specialized endosomal membrane trafficking, such as maturation of melanosomes, pathogen-induced phagosomes (or vacuoles) and autophagosomes. Plays a role in the maturation and acidification of phagosomes that engulf pathogens, such as S.aureus and Mycobacteria. Plays a role in the fusion of phagosomes with lysosomes. In concert with RAC1, plays a role in regulating the formation of RBs (ruffled borders) in osteoclasts. Controls the endosomal trafficking and neurite outgrowth signaling of NTRK1/TRKA. Regulates the endocytic trafficking of the EGF-EGFR complex by regulating its lysosomal degradation. Involved in the ADRB2-stimulated lipolysis through lipophagy, a cytosolic lipase-independent autophagic pathway. Required for the exosomal release of SDCBP, CD63 and syndecan. Required for vesicular trafficking and cell surface expression of ACE2. May play a role in PRPH neuronal intermediate filament assembly. This Oryctolagus cuniculus (Rabbit) protein is Ras-related protein Rab-7a (RAB7A).